A 238-amino-acid chain; its full sequence is Androgen-induced gene 1 protein (238 aa).

The Cytoplasmic portion of the chain corresponds to 1–12 (MALVPCQVLRMA). The helical transmembrane segment at 13–30 (ILLSYCSILCNYKAIEMP) threads the bilayer. The Extracellular segment spans residues 31 to 44 (SHQTYGGSWKFLTF). A helical transmembrane segment spans residues 45 to 67 (IDLVIQAVFFGICVLTDLSSLLT). At 68–87 (RGSGNQEQERQLKKLISLRD) the chain is on the cytoplasmic side. The chain crosses the membrane as a helical span at residues 88-110 (WMLAVLAFPVGVFVVAVFWIIYA). Over 111-124 (YDREMIYPKLLDNF) the chain is Extracellular. A helical transmembrane segment spans residues 125 to 144 (IPGWLNHGMHTTVLPFILIE). Residues 145 to 156 (MRTSHHQYPSRS) lie on the Cytoplasmic side of the membrane. A helical membrane pass occupies residues 157–179 (SGLTAICTFSVGYILWVCWVHHV). At 180–193 (TGMWVYPFLEHIGP) the chain is on the extracellular side. The chain crosses the membrane as a helical span at residues 194 to 216 (GARIIFFGSTTILMNFLYLLGEV). At 217–238 (LNNYIWDTQKSMEEEKEKPKLE) the chain is on the cytoplasmic side.

The protein belongs to the AIG1 family. In terms of tissue distribution, highly expressed in heart, ovary, testis, liver, and kidney, at lower levels in spleen, prostate, brain, skeletal muscle, pancreas, small intestine and colon, and undetected in peripheral blood leukocytes, thymus, lung and placenta. AIG1 expression is higher in hair follicles from males than from females.

Its subcellular location is the cell membrane. It carries out the reaction 9-hexadecanoyloxy-octadecanoate + H2O = 9-hydroxy-octadecanoate + hexadecanoate + H(+). The catalysed reaction is 12-hexadecanoyloxy-octadecanoate + H2O = 12-hydroxyoctadecanoate + hexadecanoate + H(+). The enzyme catalyses 9-(9Z-hexadecenoyloxy)-octadecanoate + H2O = (9Z)-hexadecenoate + 9-hydroxy-octadecanoate + H(+). It catalyses the reaction 12-(9Z-hexadecenoyloxy)-octadecanoate + H2O = 12-hydroxyoctadecanoate + (9Z)-hexadecenoate + H(+). It carries out the reaction 13-(9Z-hexadecenoyloxy)-octadecanoate + H2O = 13-hydroxy-octadecanoate + (9Z)-hexadecenoate + H(+). The catalysed reaction is 9-octadecanoyloxy-octadecanoate + H2O = 9-hydroxy-octadecanoate + octadecanoate + H(+). The enzyme catalyses 12-octadecanoyloxy-octadecanoate + H2O = 12-hydroxyoctadecanoate + octadecanoate + H(+). It catalyses the reaction 13-octadecanoyloxy-octadecanoate + H2O = 13-hydroxy-octadecanoate + octadecanoate + H(+). It carries out the reaction 9-(9Z-octadecenoyloxy)-octadecanoate + H2O = 9-hydroxy-octadecanoate + (9Z)-octadecenoate + H(+). The catalysed reaction is 12-(9Z-octadecenoyloxy)-octadecanoate + H2O = 12-hydroxyoctadecanoate + (9Z)-octadecenoate + H(+). The enzyme catalyses 13-(9Z-octadecenoyloxy)-octadecanoate + H2O = 13-hydroxy-octadecanoate + (9Z)-octadecenoate + H(+). It catalyses the reaction 5-(9Z-hexadecenoyloxy)-octadecanoate + H2O = 5-hydroxy-octadecanoate + (9Z)-hexadecenoate + H(+). With respect to regulation, inhibited by N-hydroxyhydantoin carbamate JJH260 and beta-lactone KC01. Functionally, hydrolyzes bioactive fatty-acid esters of hydroxy-fatty acids (FAHFAs), but not other major classes of lipids. Show a preference for FAHFAs with branching distal from the carboxylate head group of the lipids. The sequence is that of Androgen-induced gene 1 protein (AIG1) from Homo sapiens (Human).